The primary structure comprises 420 residues: Glycogen synthase kinase-3 beta (420 aa).

Positions 1–22 (MSGRPRTTSFAESCKPVQQPSA) are enriched in polar residues. The tract at residues 1–53 (MSGRPRTTSFAESCKPVQQPSAFGSMKVSRDKDGSKVTTVVATPGQGPDRPQE) is disordered. Ser-9 is modified (phosphoserine; by PKB/AKT1, RPS6KA3 and SGK3). The S-palmitoyl cysteine moiety is linked to residue Cys-14. A Protein kinase domain is found at 56–340 (YTDTKVIGNG…PLEACAHSFF (285 aa)). Residues 62–70 (IGNGSFGVV) and Lys-85 each bind ATP. Asp-181 acts as the Proton acceptor in catalysis. Residue Tyr-216 is modified to Phosphotyrosine. The tract at residues 385 to 420 (QAAASPPANATAASDTNAGDRGQTNNAASASASNST) is disordered. Low complexity-rich tracts occupy residues 386 to 401 (AAAS…SDTN) and 409 to 420 (NNAASASASNST). Phosphoserine is present on Ser-389.

Belongs to the protein kinase superfamily. CMGC Ser/Thr protein kinase family. GSK-3 subfamily. In terms of assembly, monomer. Interacts with DAB2IP (via C2 domain); the interaction stimulates GSK3B kinase activation. Interacts (via C2 domain) with PPP2CA. Interacts with ARRB2, AXIN1, CABYR, DISC1, MMP2, MUC1, NIN, PRUNE1 and ZBED3. Interacts with AXIN1; the interaction mediates hyperphosphorylation of CTNNB1 leading to its ubiquitination and destruction. Interacts with and phosphorylates SNAI1. Interacts with DNM1L (via a C-terminal domain). Found in a complex composed of MACF1, APC, AXIN1, CTNNB1 and GSK3B. Interacts with SGK3. Interacts with the CLOCK-BMAL1 heterodimer. Interacts with the BMAL1. Interacts with CTNND2. The complex composed, at least, of APC, CTNNB1 and GSK3B interacts with JPT1; the interaction requires the inactive form of GSK3B (phosphorylated at 'Ser-9'). Forms a complex composed of PRKAR2A or PRKAR2B, GSK3B and GSKIP through GSKIP interaction; facilitates PKA-induced phosphorylation and regulates GSK3B activity. Interacts with GSKIP. Interacts with GID8. Interacts with PIWIL2. Interacts with LMBR1L. Interacts with DDX3X. Interacts with BIRC2. Interacts with TNFRSF10B; TNFRSF10B stimulation inhibits GSK3B kinase activity. Found in a complex with SLC39A6, SLC39A10 and with GSK3B that controls NCAM1 phosphorylation. Interacts with PKP3 (via ARM repeats); the interaction may be involved in PKP3 protein degradation. Phosphorylated by AKT1 and ILK1. Upon insulin-mediated signaling, the activated PKB/AKT1 and RPS6KA3 protein kinases phosphorylate and deactivate GSK3B, resulting in the dephosphorylation and activation of GYS1. Activated by phosphorylation at Tyr-216. Inactivated by phosphorylation at Ser-9. Phosphorylated in a circadian manner in the hippocampus. In terms of processing, mono-ADP-ribosylation by PARP10 negatively regulates kinase activity. Post-translationally, palmitoylated. Palmitoylation by ZDHHC4 prevents AKT1-mediated phosphorylation.

It is found in the cytoplasm. The protein localises to the nucleus. Its subcellular location is the membrane. The protein resides in the cell membrane. The enzyme catalyses L-seryl-[tau protein] + ATP = O-phospho-L-seryl-[tau protein] + ADP + H(+). The catalysed reaction is L-threonyl-[tau protein] + ATP = O-phospho-L-threonyl-[tau protein] + ADP + H(+). It catalyses the reaction L-seryl-[protein] + ATP = O-phospho-L-seryl-[protein] + ADP + H(+). It carries out the reaction L-threonyl-[protein] + ATP = O-phospho-L-threonyl-[protein] + ADP + H(+). With respect to regulation, activated by phosphorylation at Tyr-216. In response to insulin, inhibited by phosphorylation at Ser-9 by PKB/AKT1; phosphorylation at this site causes a conformational change, preventing access of substrates to the active site. Inhibited by IL22 treatment which also triggers phosphorylation at Ser-9, promoting inactivation. Inhibited by lithium. Constitutively active protein kinase that acts as a negative regulator in the hormonal control of glucose homeostasis, Wnt signaling and regulation of transcription factors and microtubules, by phosphorylating and inactivating glycogen synthase (GYS1 or GYS2), EIF2B, CTNNB1/beta-catenin, APC, AXIN1, DPYSL2/CRMP2, JUN, NFATC1/NFATC, MAPT/TAU and MACF1. Requires primed phosphorylation of the majority of its substrates. In skeletal muscle, contributes to insulin regulation of glycogen synthesis by phosphorylating and inhibiting GYS1 activity and hence glycogen synthesis. May also mediate the development of insulin resistance by regulating activation of transcription factors. Regulates protein synthesis by controlling the activity of initiation factor 2B (EIF2BE/EIF2B5) in the same manner as glycogen synthase. In Wnt signaling, GSK3B forms a multimeric complex with APC, AXIN1 and CTNNB1/beta-catenin and phosphorylates the N-terminus of CTNNB1 leading to its degradation mediated by ubiquitin/proteasomes. Phosphorylates JUN at sites proximal to its DNA-binding domain, thereby reducing its affinity for DNA. Phosphorylates NFATC1/NFATC on conserved serine residues promoting NFATC1/NFATC nuclear export, shutting off NFATC1/NFATC gene regulation, and thereby opposing the action of calcineurin. Phosphorylates MAPT/TAU on 'Thr-548', decreasing significantly MAPT/TAU ability to bind and stabilize microtubules. MAPT/TAU is the principal component of neurofibrillary tangles in Alzheimer disease. Plays an important role in ERBB2-dependent stabilization of microtubules at the cell cortex. Phosphorylates MACF1, inhibiting its binding to microtubules which is critical for its role in bulge stem cell migration and skin wound repair. Probably regulates NF-kappa-B (NFKB1) at the transcriptional level and is required for the NF-kappa-B-mediated anti-apoptotic response to TNF-alpha (TNF/TNFA). Negatively regulates replication in pancreatic beta-cells, resulting in apoptosis, loss of beta-cells and diabetes. Through phosphorylation of the anti-apoptotic protein MCL1, may control cell apoptosis in response to growth factors deprivation. Phosphorylates MUC1 in breast cancer cells, decreasing the interaction of MUC1 with CTNNB1/beta-catenin. Is necessary for the establishment of neuronal polarity and axon outgrowth. Phosphorylates MARK2, leading to inhibition of its activity. Phosphorylates SIK1 at 'Thr-182', leading to sustainment of its activity. Phosphorylates ZC3HAV1 which enhances its antiviral activity. Phosphorylates SNAI1, leading to its ubiquitination and proteasomal degradation. Phosphorylates SFPQ at 'Thr-687' upon T-cell activation. Phosphorylates NR1D1 st 'Ser-55' and 'Ser-59' and stabilizes it by protecting it from proteasomal degradation. Regulates the circadian clock via phosphorylation of the major clock components including BMAL1, CLOCK and PER2. Phosphorylates CLOCK AT 'Ser-427' and targets it for proteasomal degradation. Phosphorylates BMAL1 at 'Ser-17' and 'Ser-21' and primes it for ubiquitination and proteasomal degradation. Phosphorylates FBXL2 at 'Thr-404' and primes it for ubiquitination by the SCF(FBXO3) complex and proteasomal degradation. Phosphorylates OGT at 'Ser-3' or 'Ser-4' which positively regulates its activity. Phosphorylates MYCN in neuroblastoma cells which may promote its degradation. Regulates the circadian rhythmicity of hippocampal long-term potentiation and BMAL1 and PER2 expression. Acts as a regulator of autophagy by mediating phosphorylation of KAT5/TIP60 under starvation conditions, activating KAT5/TIP60 acetyltransferase activity and promoting acetylation of key autophagy regulators, such as ULK1 and RUBCNL/Pacer. Negatively regulates extrinsic apoptotic signaling pathway via death domain receptors. Promotes the formation of an anti-apoptotic complex, made of DDX3X, BRIC2 and GSK3B, at death receptors, including TNFRSF10B. The anti-apoptotic function is most effective with weak apoptotic signals and can be overcome by stronger stimulation. Phosphorylates E2F1, promoting the interaction between E2F1 and USP11, stabilizing E2F1 and promoting its activity. Phosphorylates mTORC2 complex component RICTOR at 'Ser-1235' in response to endoplasmic stress, inhibiting mTORC2. Phosphorylates FXR1, promoting FXR1 ubiquitination by the SCF(FBXO4) complex and FXR1 degradation by the proteasome. Phosphorylates interleukin-22 receptor subunit IL22RA1, preventing its proteasomal degradation. The polypeptide is Glycogen synthase kinase-3 beta (Rattus norvegicus (Rat)).